A 498-amino-acid chain; its full sequence is ATP synthase subunit beta, chloroplastic (498 aa).

A Phosphothreonine modification is found at T6. The residue at position 13 (S13) is a Phosphoserine. An ATP-binding site is contributed by 172 to 179; the sequence is GGAGVGKT.

This sequence belongs to the ATPase alpha/beta chains family. As to quaternary structure, F-type ATPases have 2 components, CF(1) - the catalytic core - and CF(0) - the membrane proton channel. CF(1) has five subunits: alpha(3), beta(3), gamma(1), delta(1), epsilon(1). CF(0) has four main subunits: a(1), b(1), b'(1) and c(9-12).

The protein localises to the plastid. Its subcellular location is the chloroplast thylakoid membrane. It catalyses the reaction ATP + H2O + 4 H(+)(in) = ADP + phosphate + 5 H(+)(out). Its function is as follows. Produces ATP from ADP in the presence of a proton gradient across the membrane. The catalytic sites are hosted primarily by the beta subunits. The chain is ATP synthase subunit beta, chloroplastic from Nasturtium officinale (Watercress).